We begin with the raw amino-acid sequence, 129 residues long: Small ribosomal subunit protein uS11 (129 aa).

Belongs to the universal ribosomal protein uS11 family. In terms of assembly, part of the 30S ribosomal subunit. Interacts with proteins S7 and S18. Binds to IF-3.

Functionally, located on the platform of the 30S subunit, it bridges several disparate RNA helices of the 16S rRNA. Forms part of the Shine-Dalgarno cleft in the 70S ribosome. This is Small ribosomal subunit protein uS11 from Nitrosospira multiformis (strain ATCC 25196 / NCIMB 11849 / C 71).